The chain runs to 396 residues: MIISAASDYRAAAQRILPPFLFHYMDGGAYSEYTLRRNVEDLSEVALRQRILKNMSDLSLETTLFNEKLSMPVALAPVGLCGMYARRGEVQAAKAADAHGIPFTLSTVSVCPIEEVAPAIKRPMWFQLYVLRDRGFMRNALERAKAAGCSTLVFTVDMPTPGARYRDAHSGMSGPNAAMRRYLQAVTHPQWAWDVGLNGRPHDLGNISAYLGKPTGLEDYIGWLGNNFDPSISWKDLEWIRDFWDGPMVIKGILDPEDARDAVRFGADGIVVSNHGGRQLDGVLSSARALPAIADAVKGDIAILADSGIRNGLDVVRMIALGADTVLLGRAFLYALATAGQAGVANLLNLIEKEMKVAMTLTGAKSINEITQDSLVQGLGKELPAALAPMAKGNAA.

The 380-residue stretch at M1–G380 folds into the FMN hydroxy acid dehydrogenase domain. Y24 is a binding site for substrate. Residues S106 and Q127 each contribute to the FMN site. A substrate-binding site is contributed by Y129. Position 155 (T155) interacts with FMN. A substrate-binding site is contributed by R164. Residue K251 participates in FMN binding. The active-site Proton acceptor is the H275. Position 278 (R278) interacts with substrate. D306 to R330 is an FMN binding site.

This sequence belongs to the FMN-dependent alpha-hydroxy acid dehydrogenase family. Requires FMN as cofactor.

It localises to the cell inner membrane. The catalysed reaction is (S)-lactate + A = pyruvate + AH2. In terms of biological role, catalyzes the conversion of L-lactate to pyruvate. Is coupled to the respiratory chain. The chain is L-lactate dehydrogenase from Shigella dysenteriae serotype 1 (strain Sd197).